The sequence spans 152 residues: Ribosome maturation factor RimP (152 aa).

The protein belongs to the RimP family.

The protein resides in the cytoplasm. Its function is as follows. Required for maturation of 30S ribosomal subunits. This is Ribosome maturation factor RimP from Ruminiclostridium cellulolyticum (strain ATCC 35319 / DSM 5812 / JCM 6584 / H10) (Clostridium cellulolyticum).